The following is a 515-amino-acid chain: DNA-directed RNA polymerase subunit Rpo2N (515 aa).

It belongs to the RNA polymerase beta chain family. Part of the RNA polymerase complex.

It is found in the cytoplasm. The enzyme catalyses RNA(n) + a ribonucleoside 5'-triphosphate = RNA(n+1) + diphosphate. In terms of biological role, DNA-dependent RNA polymerase (RNAP) catalyzes the transcription of DNA into RNA using the four ribonucleoside triphosphates as substrates. The Rpo2 subunit (Rpo2N and Rpo2C in this organism) is implicated in DNA promoter recognition and in nucleotide binding. This Methanothermobacter thermautotrophicus (strain Winter) (Methanobacterium thermoautotrophicum) protein is DNA-directed RNA polymerase subunit Rpo2N.